A 571-amino-acid polypeptide reads, in one-letter code: Septation ring formation regulator EzrA (571 aa).

The Extracellular segment spans residues 1–3 (MYY). A helical membrane pass occupies residues 4–22 (MLIGFIIVVIAIISAGYIL). Topologically, residues 23-571 (KRKHYQRINE…ESKVSVDDIE (549 aa)) are cytoplasmic. Coiled-coil stretches lie at residues 169-214 (VETK…AQME), 249-298 (AQME…DTLE), 326-374 (DALA…ASGE), 400-438 (KFAE…RERL), and 474-529 (TQDW…ENHF).

Belongs to the EzrA family.

The protein localises to the cell membrane. Its function is as follows. Negative regulator of FtsZ ring formation; modulates the frequency and position of FtsZ ring formation. Inhibits FtsZ ring formation at polar sites. Interacts either with FtsZ or with one of its binding partners to promote depolymerization. This Listeria welshimeri serovar 6b (strain ATCC 35897 / DSM 20650 / CCUG 15529 / CIP 8149 / NCTC 11857 / SLCC 5334 / V8) protein is Septation ring formation regulator EzrA.